A 349-amino-acid chain; its full sequence is Probable dual-specificity RNA methyltransferase RlmN (349 aa).

The active-site Proton acceptor is the Glu-94. In terms of domain architecture, Radical SAM core spans 100–334 (TETRTTACVS…VKVRRSRGKD (235 aa)). A disulfide bridge connects residues Cys-107 and Cys-339. [4Fe-4S] cluster is bound by residues Cys-114, Cys-118, and Cys-121. Residues 165–166 (GE), Ser-197, 220–222 (SLH), and Asn-296 each bind S-adenosyl-L-methionine. Cys-339 serves as the catalytic S-methylcysteine intermediate.

It belongs to the radical SAM superfamily. RlmN family. [4Fe-4S] cluster is required as a cofactor.

It localises to the cytoplasm. It carries out the reaction adenosine(2503) in 23S rRNA + 2 reduced [2Fe-2S]-[ferredoxin] + 2 S-adenosyl-L-methionine = 2-methyladenosine(2503) in 23S rRNA + 5'-deoxyadenosine + L-methionine + 2 oxidized [2Fe-2S]-[ferredoxin] + S-adenosyl-L-homocysteine. The catalysed reaction is adenosine(37) in tRNA + 2 reduced [2Fe-2S]-[ferredoxin] + 2 S-adenosyl-L-methionine = 2-methyladenosine(37) in tRNA + 5'-deoxyadenosine + L-methionine + 2 oxidized [2Fe-2S]-[ferredoxin] + S-adenosyl-L-homocysteine. Functionally, specifically methylates position 2 of adenine 2503 in 23S rRNA and position 2 of adenine 37 in tRNAs. This Flavobacterium johnsoniae (strain ATCC 17061 / DSM 2064 / JCM 8514 / BCRC 14874 / CCUG 350202 / NBRC 14942 / NCIMB 11054 / UW101) (Cytophaga johnsonae) protein is Probable dual-specificity RNA methyltransferase RlmN.